We begin with the raw amino-acid sequence, 187 residues long: Interferon alpha-3 (187 aa).

The first 23 residues, 1-23 (MALPCSFSVALVLLSCHSLCCLA), serve as a signal peptide directing secretion. 2 disulfide bridges follow: Cys24/Cys122 and Cys52/Cys160. Asn94 and Asn101 each carry an N-linked (GlcNAc...) asparagine glycan.

Belongs to the alpha/beta interferon family.

Its subcellular location is the secreted. Produced by macrophages, IFN-alpha have antiviral activities. Interferon stimulates the production of two enzymes: a protein kinase and an oligoadenylate synthetase. The polypeptide is Interferon alpha-3 (Canis lupus familiaris (Dog)).